A 96-amino-acid chain; its full sequence is UPF0251 protein VPA0321 (96 aa).

It belongs to the UPF0251 family.

This chain is UPF0251 protein VPA0321, found in Vibrio parahaemolyticus serotype O3:K6 (strain RIMD 2210633).